A 286-amino-acid polypeptide reads, in one-letter code: MKQFIVLTVVLLAIQELQGGAVLTVDEKCTCKDTLNTLSKDDLILRLITCTQRNENLEGIITAIKKDNDFLNKENDALRAQNCELTAQLAKEKKAREAAENALCECQKNSELLKQTIEQLKKELAQTKQELANCKEALANCKAENAKLLKKIEELNCTITQLQEELEQCRARERDLQCQLDECNKKLTICNNELIACRKQQEELRCEIERLNAEIKRLEAQNAACENALNTLRCETSEFLAIATQRQSKLTTIIQSAEAESTAIGASYIGFRNTHDLTCAPCGGPA.

The first 19 residues, 1–19 (MKQFIVLTVVLLAIQELQG), serve as a signal peptide directing secretion. The helical stretch occupies residues 61 to 235 (ITAIKKDNDF…ENALNTLRCE (175 aa)). N-linked (GlcNAc...) asparagine glycosylation is present at Asn156.

This chain is Puff II/9-1 protein (II/9-1), found in Bradysia coprophila (Dark-winged fungus gnat).